The sequence spans 254 residues: Thiazole synthase (254 aa).

Lys93 acts as the Schiff-base intermediate with DXP in catalysis. Residues Gly154, 181–182 (AG), and 203–204 (NT) contribute to the 1-deoxy-D-xylulose 5-phosphate site.

Belongs to the ThiG family. In terms of assembly, homotetramer. Forms heterodimers with either ThiH or ThiS.

The protein localises to the cytoplasm. The catalysed reaction is [ThiS sulfur-carrier protein]-C-terminal-Gly-aminoethanethioate + 2-iminoacetate + 1-deoxy-D-xylulose 5-phosphate = [ThiS sulfur-carrier protein]-C-terminal Gly-Gly + 2-[(2R,5Z)-2-carboxy-4-methylthiazol-5(2H)-ylidene]ethyl phosphate + 2 H2O + H(+). Its pathway is cofactor biosynthesis; thiamine diphosphate biosynthesis. In terms of biological role, catalyzes the rearrangement of 1-deoxy-D-xylulose 5-phosphate (DXP) to produce the thiazole phosphate moiety of thiamine. Sulfur is provided by the thiocarboxylate moiety of the carrier protein ThiS. In vitro, sulfur can be provided by H(2)S. The polypeptide is Thiazole synthase (Ruegeria pomeroyi (strain ATCC 700808 / DSM 15171 / DSS-3) (Silicibacter pomeroyi)).